Here is a 975-residue protein sequence, read N- to C-terminus: Glycine dehydrogenase (decarboxylating) (975 aa).

An N6-(pyridoxal phosphate)lysine modification is found at Lys723.

This sequence belongs to the GcvP family. As to quaternary structure, the glycine cleavage system is composed of four proteins: P, T, L and H. It depends on pyridoxal 5'-phosphate as a cofactor.

The enzyme catalyses N(6)-[(R)-lipoyl]-L-lysyl-[glycine-cleavage complex H protein] + glycine + H(+) = N(6)-[(R)-S(8)-aminomethyldihydrolipoyl]-L-lysyl-[glycine-cleavage complex H protein] + CO2. In terms of biological role, the glycine cleavage system catalyzes the degradation of glycine. The P protein binds the alpha-amino group of glycine through its pyridoxal phosphate cofactor; CO(2) is released and the remaining methylamine moiety is then transferred to the lipoamide cofactor of the H protein. This Burkholderia ambifaria (strain MC40-6) protein is Glycine dehydrogenase (decarboxylating).